Consider the following 192-residue polypeptide: Fe/S biogenesis protein NfuA (192 aa).

Positions 149 and 152 each coordinate [4Fe-4S] cluster.

Belongs to the NfuA family. Homodimer. [4Fe-4S] cluster is required as a cofactor.

Its function is as follows. Involved in iron-sulfur cluster biogenesis. Binds a 4Fe-4S cluster, can transfer this cluster to apoproteins, and thereby intervenes in the maturation of Fe/S proteins. Could also act as a scaffold/chaperone for damaged Fe/S proteins. The polypeptide is Fe/S biogenesis protein NfuA (Aeromonas hydrophila subsp. hydrophila (strain ATCC 7966 / DSM 30187 / BCRC 13018 / CCUG 14551 / JCM 1027 / KCTC 2358 / NCIMB 9240 / NCTC 8049)).